The primary structure comprises 156 residues: Low molecular weight phosphotyrosine protein phosphatase (156 aa).

The Nucleophile role is filled by Cys-11. Arg-17 is an active-site residue. Asp-128 acts as the Proton donor in catalysis.

It belongs to the low molecular weight phosphotyrosine protein phosphatase family.

Its subcellular location is the cytoplasm. It catalyses the reaction O-phospho-L-tyrosyl-[protein] + H2O = L-tyrosyl-[protein] + phosphate. The enzyme catalyses a phosphate monoester + H2O = an alcohol + phosphate. Functionally, may contribute to dephosphorylation of 'Tyr-15' of cdc2. This is Low molecular weight phosphotyrosine protein phosphatase (stp1) from Schizosaccharomyces pombe (strain 972 / ATCC 24843) (Fission yeast).